Here is a 217-residue protein sequence, read N- to C-terminus: ATP-dependent Clp protease proteolytic subunit 2 (217 aa).

Serine 113 acts as the Nucleophile in catalysis. Residue histidine 138 is part of the active site.

The protein belongs to the peptidase S14 family. In terms of assembly, fourteen ClpP subunits assemble into 2 heptameric rings which stack back to back to give a disk-like structure with a central cavity, resembling the structure of eukaryotic proteasomes.

Its subcellular location is the cytoplasm. It catalyses the reaction Hydrolysis of proteins to small peptides in the presence of ATP and magnesium. alpha-casein is the usual test substrate. In the absence of ATP, only oligopeptides shorter than five residues are hydrolyzed (such as succinyl-Leu-Tyr-|-NHMec, and Leu-Tyr-Leu-|-Tyr-Trp, in which cleavage of the -Tyr-|-Leu- and -Tyr-|-Trp bonds also occurs).. In terms of biological role, cleaves peptides in various proteins in a process that requires ATP hydrolysis. Has a chymotrypsin-like activity. Plays a major role in the degradation of misfolded proteins. This chain is ATP-dependent Clp protease proteolytic subunit 2, found in Frankia casuarinae (strain DSM 45818 / CECT 9043 / HFP020203 / CcI3).